An 88-amino-acid chain; its full sequence is Small ribosomal subunit protein uS17 (88 aa).

This sequence belongs to the universal ribosomal protein uS17 family. Part of the 30S ribosomal subunit.

One of the primary rRNA binding proteins, it binds specifically to the 5'-end of 16S ribosomal RNA. This is Small ribosomal subunit protein uS17 from Pseudomonas putida (strain ATCC 700007 / DSM 6899 / JCM 31910 / BCRC 17059 / LMG 24140 / F1).